We begin with the raw amino-acid sequence, 174 residues long: RxLR effector protein 207 (174 aa).

The first 20 residues, 1 to 20, serve as a signal peptide directing secretion; that stretch reads MSKVFLLLVLSVFALVSCDA. The short motif at 46-62 is the RxLR-dEER element; it reads RMLRAQEEPTNAADEER. The segment at 82 to 99 is disordered; sequence VTNSKLVQSMNNKLASLT.

It belongs to the RxLR effector family. Interacts with Nicotiana benthamiana ACD11, BPA1 (binding partner of ACD11), as well as BPA-like proteins BPL1, BPL2, BPL3 and BPL4.

The protein resides in the secreted. It is found in the host cell membrane. Functionally, secreted effector that activates ROS-mediated cell death in plant host and is essential for virulence. Plays a role in the transition from the biotrophic to necrotrophic stage. Associates with and promotes the degradation of Nicotiana benthamiana BPA1, BPL1, BPL2, and BPL4 to disrupt ACD11 stabilization in a 26S proteasome-dependent manner. The chain is RxLR effector protein 207 from Phytophthora capsici.